A 117-amino-acid chain; its full sequence is Large ribosomal subunit protein uL18 (117 aa).

It belongs to the universal ribosomal protein uL18 family. Part of the 50S ribosomal subunit; part of the 5S rRNA/L5/L18/L25 subcomplex. Contacts the 5S and 23S rRNAs.

Its function is as follows. This is one of the proteins that bind and probably mediate the attachment of the 5S RNA into the large ribosomal subunit, where it forms part of the central protuberance. This is Large ribosomal subunit protein uL18 from Alkalilimnicola ehrlichii (strain ATCC BAA-1101 / DSM 17681 / MLHE-1).